Here is a 685-residue protein sequence, read N- to C-terminus: MKPLLLLPLLGCLATIASCIDTVKWCVTSTKENLKCTALAAAAPVFSCVARASITDCLTAIKAGEADAITLDGGEIYTAGLDEYKLHPIIAEQYGTSTDTCYYAVAVAKKNTGFGLHQLMGKKSCHTGVGKSAGWNIPIGTLLSMDFIKWKGSDDKKLEEVVGEFFHSSCAPGATDSANLCKLCIGDCSKSSETEPYYNYHGAFQCLKDGKGDVAFVKHLTVPEEEKNDYELLCKDNTRKPIDQFENCDLAKVPSHAVVTRKDNEELAQFIWQSLSSVKNFNLFSSTPYGGKNLMFKDSTTTLVQLPLNVDHTMYLGPHYLESVKALKIVNIPSTTSDAMKWCAVGRSESDKCDSWSVASLVQDGTTIDCIKGNTVDDCLKKIMHKEADAMAVDGGQVYTAGKCGLVPAMVEQYDQGQCSAPGAARLYYAVAVIKKGSGVTWENLRNKRSCHTGIGRNAGWNIPMGLIYEQTKNCNFSAFFSSSCAPGADPSSQLCAQCAGNAESINKCKASNEERYYAYAGAFRCLAEGKGDVAFVKHSIVKENTDGQGPEWAKAFLSNDYELICPSKGPVSVENFMSCNLAKVNAHAVVTRPEIRTKVVTFLNNQQSHFGNSASEESFKMFTSPDGENLLFKYSTKCLQEIPAHLDYKGFLGQEYMTVMSSLRTCKESTSDLEQLCTYNMCQT.

The first 16 residues, 1 to 16, serve as a signal peptide directing secretion; sequence MKPLLLLPLLGCLATI. 2 consecutive Transferrin-like domains span residues 23-329 and 340-666; these read VKWC…ALKI and MKWC…SLRT. A disulfide bridge connects residues C26 and C48. Residues D72 and Y102 each coordinate Fe(3+). 3 disulfide bridges follow: C125/C206, C170/C184, and C234/C248. T127, K131, A133, and G134 together coordinate hydrogencarbonate. A Fe(3+)-binding site is contributed by Y200. Residue H256 coordinates Fe(3+). Cystine bridges form between C343-C379 and C353-C370. D394 and Y428 together coordinate Fe(3+). 7 cysteine pairs are disulfide-bonded: C404/C678, C419/C639, C451/C526, C475/C667, C485/C499, C496/C509, and C566/C580. T453, R457, A459, and G460 together coordinate hydrogencarbonate. The N-linked (GlcNAc...) asparagine glycan is linked to N476. Fe(3+) is bound at residue Y520. H588 contributes to the Fe(3+) binding site.

The protein belongs to the transferrin family. Monomer.

It is found in the secreted. Functionally, transferrins are iron binding transport proteins which can bind two Fe(3+) ions in association with the binding of an anion, usually bicarbonate. The chain is Serotransferrin (tf) from Paralichthys olivaceus (Bastard halibut).